A 75-amino-acid polypeptide reads, in one-letter code: Sec-independent protein translocase protein TatA (75 aa).

Residues 1–21 traverse the membrane as a helical segment; sequence MGSFSIWHWLIVLVIVLLVFG. Residues 41–75 form a disordered region; that stretch reads KGMHDDDKPAGKLGDDSRSAEQAREAQAERDRDAR.

This sequence belongs to the TatA/E family. As to quaternary structure, the Tat system comprises two distinct complexes: a TatABC complex, containing multiple copies of TatA, TatB and TatC subunits, and a separate TatA complex, containing only TatA subunits. Substrates initially bind to the TatABC complex, which probably triggers association of the separate TatA complex to form the active translocon.

It localises to the cell inner membrane. Part of the twin-arginine translocation (Tat) system that transports large folded proteins containing a characteristic twin-arginine motif in their signal peptide across membranes. TatA could form the protein-conducting channel of the Tat system. This chain is Sec-independent protein translocase protein TatA, found in Xanthomonas campestris pv. campestris (strain 8004).